Reading from the N-terminus, the 335-residue chain is MAENENHVLSIRMSHPYYSEKEISRILSTRDPKENNLRMQAFAWISTLSKTLKFPVRTSGLAMLLYSRFQLFFPVNEIPLLECATACLVVASKIEDTAKKFRDILLAHYLQKHPGSEVDAHSQVCYKLIEENKKRILGLERMTLELICFDFRVRHPHNYMVKFAKSLKFSSSTASIAWNVCTDAYKTYTMLKYPAHIVAVASISIACKLQQLPQPIIPRSFFAPPALTEAVIADILDLYMHYQPHTCIGNMYTTEKLLGLCVDFQRAQKNSGRPQKPPQIDPHSSSLADEYRESNKRLQESKESCARFILDCDRKYFNTEFEKRMLEERRNKGTV.

2 Cyclin N-terminal domains span residues 26–151 and 158–241; these read ILST…CFDF and NYMV…LYMH. The interval 269–293 is disordered; the sequence is KNSGRPQKPPQIDPHSSSLADEYRE.

This sequence belongs to the cyclin family. As to quaternary structure, CTDK-I consists of three subunits, ctk1/lsk1, ctk2/lsc1 and ctk3 (also called alpha, beta and gamma). Interacts with ctk1/lsk1. This interaction is dependent on ctk1/lsk1 kinase activity.

It localises to the cytoplasm. The protein resides in the nucleus. Functionally, cyclin subunit of the CTDK-I complex, which hyperphosphorylates the C-terminal heptapeptide repeat domain (CTD) of the largest RNA polymerase II subunit. As part of the CTDK-I complex, involved in RNA polymerase II transcriptional elongation and pre-mRNA 3'-end processing. Together with ctk3, required for ctk1/lsk1 CTD kinase activation. Together with ctk1/lsk1, required for the regulation of cytokinesis by phosphorylating 'Ser-2' residues found in the heptad repeats of the CTD. This Schizosaccharomyces pombe (strain 972 / ATCC 24843) (Fission yeast) protein is CTD kinase subunit beta (lsc1).